Consider the following 416-residue polypeptide: Glutamyl-tRNA reductase (416 aa).

Substrate is bound by residues 49–52 (TCNR), Ser105, 110–112 (EPQ), and Gln116. Cys50 serves as the catalytic Nucleophile. Residue 185–190 (GAGETI) coordinates NADP(+).

The protein belongs to the glutamyl-tRNA reductase family. In terms of assembly, homodimer.

The enzyme catalyses (S)-4-amino-5-oxopentanoate + tRNA(Glu) + NADP(+) = L-glutamyl-tRNA(Glu) + NADPH + H(+). Its pathway is porphyrin-containing compound metabolism; protoporphyrin-IX biosynthesis; 5-aminolevulinate from L-glutamyl-tRNA(Glu): step 1/2. In terms of biological role, catalyzes the NADPH-dependent reduction of glutamyl-tRNA(Glu) to glutamate 1-semialdehyde (GSA). This is Glutamyl-tRNA reductase from Shewanella pealeana (strain ATCC 700345 / ANG-SQ1).